The sequence spans 85 residues: Large ribosomal subunit protein bL27 (85 aa).

Residues 1-22 (MAHKKGQGSSRNGRDSPGQRRG) are disordered.

Belongs to the bacterial ribosomal protein bL27 family.

This chain is Large ribosomal subunit protein bL27, found in Anaeromyxobacter dehalogenans (strain 2CP-1 / ATCC BAA-258).